We begin with the raw amino-acid sequence, 1026 residues long: RecBCD enzyme subunit RecB (1026 aa).

Residues 1-438 (MSSFDIFSPT…LILDTNYRST (438 aa)) enclose the UvrD-like helicase ATP-binding domain. The segment at 1–766 (MSSFDIFSPT…LANYANITQH (766 aa)) is DNA-binding and helicase activity, interacts with RecC. 21-28 (ASAGTGKT) is a binding site for ATP. The region spanning 452-700 (PSPFLETPQT…KITTVHSSKG (249 aa)) is the UvrD-like helicase C-terminal domain. Residues 815–1026 (SQPIYSFSST…KGNGFLQPSP (212 aa)) are nuclease activity, interacts with RecD and RecA. Mg(2+) contacts are provided by H854, D940, and D953. Residue D953 is the For nuclease activity of the active site.

Belongs to the helicase family. UvrD subfamily. In terms of assembly, heterotrimer of RecB, RecC and RecD. All subunits contribute to DNA-binding. Interacts with RecA. Requires Mg(2+) as cofactor.

The catalysed reaction is Exonucleolytic cleavage (in the presence of ATP) in either 5'- to 3'- or 3'- to 5'-direction to yield 5'-phosphooligonucleotides.. It carries out the reaction Couples ATP hydrolysis with the unwinding of duplex DNA by translocating in the 3'-5' direction.. The enzyme catalyses ATP + H2O = ADP + phosphate + H(+). Functionally, a helicase/nuclease that prepares dsDNA breaks (DSB) for recombinational DNA repair. Binds to DSBs and unwinds DNA via a highly rapid and processive ATP-dependent bidirectional helicase activity. Unwinds dsDNA until it encounters a Chi (crossover hotspot instigator) sequence from the 3' direction. Cuts ssDNA a few nucleotides 3' to the Chi site. The properties and activities of the enzyme are changed at Chi. The Chi-altered holoenzyme produces a long 3'-ssDNA overhang and facilitates RecA-binding to the ssDNA for homologous DNA recombination and repair. Holoenzyme degrades any linearized DNA that is unable to undergo homologous recombination. In the holoenzyme this subunit contributes ATPase, 3'-5' helicase, exonuclease activity and loads RecA onto ssDNA. This is RecBCD enzyme subunit RecB from Chlamydia muridarum (strain MoPn / Nigg).